The following is a 101-amino-acid chain: Small ribosomal subunit protein uS14 (101 aa).

Basic and acidic residues predominate over residues 1–10 (MAKKSSIEKN). The segment at 1–23 (MAKKSSIEKNNRRKRMVKNAAPK) is disordered.

Belongs to the universal ribosomal protein uS14 family. Part of the 30S ribosomal subunit. Contacts proteins S3 and S10.

Binds 16S rRNA, required for the assembly of 30S particles and may also be responsible for determining the conformation of the 16S rRNA at the A site. This Bradyrhizobium diazoefficiens (strain JCM 10833 / BCRC 13528 / IAM 13628 / NBRC 14792 / USDA 110) protein is Small ribosomal subunit protein uS14.